The chain runs to 178 residues: Mediator of RNA polymerase II transcription subunit 30 (178 aa).

The segment at 1–22 (MSTPPLAASGMAPGPFAGPQAQ) is disordered. N-acetylserine is present on Ser2. The span at 10 to 22 (GMAPGPFAGPQAQ) shows a compositional bias: low complexity. 2 coiled-coil regions span residues 70–94 (TYQD…KLRL) and 133–173 (RFAS…INAM).

Belongs to the Mediator complex subunit 30 family. Component of the Mediator complex, which is composed of MED1, MED4, MED6, MED7, MED8, MED9, MED10, MED11, MED12, MED13, MED13L, MED14, MED15, MED16, MED17, MED18, MED19, MED20, MED21, MED22, MED23, MED24, MED25, MED26, MED27, MED29, MED30, MED31, CCNC, CDK8 and CDC2L6/CDK11. The MED12, MED13, CCNC and CDK8 subunits form a distinct module termed the CDK8 module. Mediator containing the CDK8 module is less active than Mediator lacking this module in supporting transcriptional activation. Individual preparations of the Mediator complex lacking one or more distinct subunits have been variously termed ARC, CRSP, DRIP, PC2, SMCC and TRAP. Expressed in brain, heart, kidney, liver, lung, pancreas, placenta and skeletal muscle.

The protein localises to the nucleus. In terms of biological role, component of the Mediator complex, a coactivator involved in the regulated transcription of nearly all RNA polymerase II-dependent genes. Mediator functions as a bridge to convey information from gene-specific regulatory proteins to the basal RNA polymerase II transcription machinery. Mediator is recruited to promoters by direct interactions with regulatory proteins and serves as a scaffold for the assembly of a functional preinitiation complex with RNA polymerase II and the general transcription factors. The protein is Mediator of RNA polymerase II transcription subunit 30 (MED30) of Homo sapiens (Human).